The following is a 378-amino-acid chain: tRNA-specific 2-thiouridylase MnmA (378 aa).

ATP is bound by residues 6-13 and Leu-32; that span reads AMSGGVDS. Cys-101 acts as the Nucleophile in catalysis. A disulfide bridge links Cys-101 with Cys-199. Gly-125 serves as a coordination point for ATP. The interval 148-150 is interaction with tRNA; the sequence is KDQ. Cys-199 functions as the Cysteine persulfide intermediate in the catalytic mechanism.

It belongs to the MnmA/TRMU family.

It localises to the cytoplasm. It carries out the reaction S-sulfanyl-L-cysteinyl-[protein] + uridine(34) in tRNA + AH2 + ATP = 2-thiouridine(34) in tRNA + L-cysteinyl-[protein] + A + AMP + diphosphate + H(+). Catalyzes the 2-thiolation of uridine at the wobble position (U34) of tRNA, leading to the formation of s(2)U34. In Micrococcus luteus (strain ATCC 4698 / DSM 20030 / JCM 1464 / CCM 169 / CCUG 5858 / IAM 1056 / NBRC 3333 / NCIMB 9278 / NCTC 2665 / VKM Ac-2230) (Micrococcus lysodeikticus), this protein is tRNA-specific 2-thiouridylase MnmA.